Consider the following 89-residue polypeptide: Small ribosomal subunit protein uS15 (89 aa).

It belongs to the universal ribosomal protein uS15 family. In terms of assembly, part of the 30S ribosomal subunit. Forms a bridge to the 50S subunit in the 70S ribosome, contacting the 23S rRNA.

Functionally, one of the primary rRNA binding proteins, it binds directly to 16S rRNA where it helps nucleate assembly of the platform of the 30S subunit by binding and bridging several RNA helices of the 16S rRNA. Forms an intersubunit bridge (bridge B4) with the 23S rRNA of the 50S subunit in the ribosome. The sequence is that of Small ribosomal subunit protein uS15 from Caulobacter vibrioides (strain NA1000 / CB15N) (Caulobacter crescentus).